We begin with the raw amino-acid sequence, 292 residues long: Ribosomal protein L11 methyltransferase (292 aa).

4 residues coordinate S-adenosyl-L-methionine: Thr144, Gly165, Asp187, and Asn229.

The protein belongs to the methyltransferase superfamily. PrmA family.

Its subcellular location is the cytoplasm. The enzyme catalyses L-lysyl-[protein] + 3 S-adenosyl-L-methionine = N(6),N(6),N(6)-trimethyl-L-lysyl-[protein] + 3 S-adenosyl-L-homocysteine + 3 H(+). Its function is as follows. Methylates ribosomal protein L11. This Pseudomonas putida (strain ATCC 47054 / DSM 6125 / CFBP 8728 / NCIMB 11950 / KT2440) protein is Ribosomal protein L11 methyltransferase.